A 327-amino-acid polypeptide reads, in one-letter code: GPI-linked NAD(P)(+)--arginine ADP-ribosyltransferase 1 (327 aa).

The N-terminal stretch at 1-22 is a signal peptide; the sequence is MWVPAVANLLLLSLGLLEAIQA. Intrachain disulfides connect C53/C277 and C174/C224. N65 is a glycosylation site (N-linked (GlcNAc...) asparagine). Residues 73–273 enclose the TR mART core domain; the sequence is KVYADGWALA…IYLKALGKRS (201 aa). Positions 121 and 179 each coordinate NAD(+). Catalysis depends on residues R179 and S202. S233 contributes to the NAD(+) binding site. Residue E240 is part of the active site. A glycan (N-linked (GlcNAc...) asparagine) is linked at N253. The GPI-anchor amidated serine moiety is linked to residue S295. A propeptide spans 296 to 327 (removed in mature form); that stretch reads ASAQERLSTAWSLLLLLAFLAVGPFPGSPGLF.

It belongs to the Arg-specific ADP-ribosyltransferase family. As to expression, primarily in skeletal and cardiac muscle.

The protein resides in the sarcoplasmic reticulum membrane. It carries out the reaction L-arginyl-[protein] + NAD(+) = N(omega)-(ADP-D-ribosyl)-L-arginyl-[protein] + nicotinamide + H(+). Has ADP-ribosyltransferase activity toward GLP1R. The chain is GPI-linked NAD(P)(+)--arginine ADP-ribosyltransferase 1 (ART1) from Oryctolagus cuniculus (Rabbit).